The following is a 693-amino-acid chain: Golgin subfamily A member 6C (693 aa).

Disordered stretches follow at residues Asn-20–Tyr-71, Leu-497–Gln-547, and Asn-629–Thr-693. Positions Glu-73–Leu-611 form a coiled coil. Positions Leu-537–Gln-547 are enriched in basic and acidic residues. Polar residues predominate over residues Pro-679 to Thr-693.

The protein belongs to the GOLGA6 family.

The polypeptide is Golgin subfamily A member 6C (GOLGA6C) (Homo sapiens (Human)).